The sequence spans 295 residues: Malonyl-[acyl-carrier protein] O-methyltransferase (295 aa).

It belongs to the methyltransferase superfamily.

It carries out the reaction malonyl-[ACP] + S-adenosyl-L-methionine = malonyl-[ACP] methyl ester + S-adenosyl-L-homocysteine. It functions in the pathway cofactor biosynthesis; biotin biosynthesis. Functionally, converts the free carboxyl group of a malonyl-thioester to its methyl ester by transfer of a methyl group from S-adenosyl-L-methionine (SAM). It allows to synthesize pimeloyl-ACP via the fatty acid synthetic pathway. This Xylella fastidiosa (strain M23) protein is Malonyl-[acyl-carrier protein] O-methyltransferase.